The following is a 141-amino-acid chain: Nucleoside diphosphate kinase (141 aa).

ATP-binding residues include K11, F59, R87, T93, R104, and N114. H117 serves as the catalytic Pros-phosphohistidine intermediate.

Belongs to the NDK family. Homotetramer. The cofactor is Mg(2+).

Its subcellular location is the cytoplasm. The enzyme catalyses a 2'-deoxyribonucleoside 5'-diphosphate + ATP = a 2'-deoxyribonucleoside 5'-triphosphate + ADP. It carries out the reaction a ribonucleoside 5'-diphosphate + ATP = a ribonucleoside 5'-triphosphate + ADP. Major role in the synthesis of nucleoside triphosphates other than ATP. The ATP gamma phosphate is transferred to the NDP beta phosphate via a ping-pong mechanism, using a phosphorylated active-site intermediate. The sequence is that of Nucleoside diphosphate kinase from Acidovorax ebreus (strain TPSY) (Diaphorobacter sp. (strain TPSY)).